The following is a 512-amino-acid chain: Retinaldehyde dehydrogenase 3 (512 aa).

Residues M1–P23 form a disordered region. A2 carries the N-acetylalanine modification. Residues K204, E207, and G257–G262 contribute to the NAD(+) site. Catalysis depends on E280, which acts as the Proton acceptor. Residue C314 is the Nucleophile of the active site. Q361 and E411 together coordinate NAD(+).

It belongs to the aldehyde dehydrogenase family. Homotetramer.

It localises to the cytoplasm. It catalyses the reaction all-trans-retinal + NAD(+) + H2O = all-trans-retinoate + NADH + 2 H(+). The enzyme catalyses retinal + NAD(+) + H2O = retinoate + NADH + 2 H(+). The catalysed reaction is all-trans-13,14-dihydroretinal + NAD(+) + H2O = all-trans-13,14-dihydroretinoate + NADH + 2 H(+). It functions in the pathway cofactor metabolism; retinol metabolism. In terms of biological role, catalyzes the NAD-dependent oxidation of aldehyde substrates, such as all-trans-retinal and all-trans-13,14-dihydroretinal, to their corresponding carboxylic acids, all-trans-retinoate and all-trans-13,14-dihydroretinoate, respectively. High specificity for all-trans-retinal as substrate, can also accept acetaldehyde as substrate in vitro but with lower affinity. Required for the biosynthesis of normal levels of retinoate in the embryonic ocular and nasal regions; a critical lipid in the embryonic development of the eye and the nasal region. This chain is Retinaldehyde dehydrogenase 3 (Aldh1a3), found in Rattus norvegicus (Rat).